The following is a 151-amino-acid chain: Probable cGMP 3',5'-cyclic phosphodiesterase subunit delta (151 aa).

This sequence belongs to the PDE6D/unc-119 family. In terms of assembly, interacts with Pde6.

The protein resides in the nucleus. It localises to the cytoplasm. This is Probable cGMP 3',5'-cyclic phosphodiesterase subunit delta from Drosophila willistoni (Fruit fly).